Reading from the N-terminus, the 142-residue chain is Fusaric acid resistance protein FusB (142 aa).

A disordered region spans residues 73–142 (AAPCSRKAST…ASCSPAIRPR (70 aa)). Positions 81–142 (STGSPARSSG…ASCSPAIRPR (62 aa)) are enriched in low complexity.

Its function is as follows. Involved in the resistance (detoxification) of the fungal toxin fusaric acid. The protein is Fusaric acid resistance protein FusB (fusB) of Burkholderia cepacia (Pseudomonas cepacia).